We begin with the raw amino-acid sequence, 309 residues long: NAD kinase 2 (309 aa).

D81 acts as the Proton acceptor in catalysis. NAD(+) is bound by residues 81–82 (DG), 155–156 (NE), D185, 196–201 (TAYALS), and N255.

It belongs to the NAD kinase family. It depends on a divalent metal cation as a cofactor.

It is found in the cytoplasm. The enzyme catalyses NAD(+) + ATP = ADP + NADP(+) + H(+). Its function is as follows. Involved in the regulation of the intracellular balance of NAD and NADP, and is a key enzyme in the biosynthesis of NADP. Catalyzes specifically the phosphorylation on 2'-hydroxyl of the adenosine moiety of NAD to yield NADP. The sequence is that of NAD kinase 2 from Gloeobacter violaceus (strain ATCC 29082 / PCC 7421).